Reading from the N-terminus, the 96-residue chain is Exodeoxyribonuclease 7 small subunit (96 aa).

The segment at 73–96 (RAPEQSAANDVSAPGSAEEHDHGR) is disordered.

Belongs to the XseB family. In terms of assembly, heterooligomer composed of large and small subunits.

The protein localises to the cytoplasm. The catalysed reaction is Exonucleolytic cleavage in either 5'- to 3'- or 3'- to 5'-direction to yield nucleoside 5'-phosphates.. In terms of biological role, bidirectionally degrades single-stranded DNA into large acid-insoluble oligonucleotides, which are then degraded further into small acid-soluble oligonucleotides. The sequence is that of Exodeoxyribonuclease 7 small subunit from Acidothermus cellulolyticus (strain ATCC 43068 / DSM 8971 / 11B).